Consider the following 443-residue polypeptide: Tol-Pal system protein TolB (443 aa).

An N-terminal signal peptide occupies residues 1 to 18 (MRNIVYFILTLFSLTSYA).

Belongs to the TolB family. The Tol-Pal system is composed of five core proteins: the inner membrane proteins TolA, TolQ and TolR, the periplasmic protein TolB and the outer membrane protein Pal. They form a network linking the inner and outer membranes and the peptidoglycan layer.

The protein resides in the periplasm. In terms of biological role, part of the Tol-Pal system, which plays a role in outer membrane invagination during cell division and is important for maintaining outer membrane integrity. The chain is Tol-Pal system protein TolB from Rickettsia prowazekii (strain Madrid E).